The chain runs to 153 residues: UPF0178 protein CC_1215 (153 aa).

This sequence belongs to the UPF0178 family.

This chain is UPF0178 protein CC_1215, found in Caulobacter vibrioides (strain ATCC 19089 / CIP 103742 / CB 15) (Caulobacter crescentus).